Reading from the N-terminus, the 603-residue chain is Penicillin-binding protein activator LpoA (603 aa).

Positions 1–26 (MANMTPRKNSVTRLIAPVALALTLAA) are cleaved as a signal peptide. The N-palmitoyl cysteine moiety is linked to residue Cys-27. A lipid anchor (S-diacylglycerol cysteine) is attached at Cys-27.

It belongs to the LpoA family. In terms of assembly, interacts with PBP1a.

It localises to the cell outer membrane. Functionally, regulator of peptidoglycan synthesis that is essential for the function of penicillin-binding protein 1A (PBP1a). The polypeptide is Penicillin-binding protein activator LpoA (Aliivibrio fischeri (strain ATCC 700601 / ES114) (Vibrio fischeri)).